The sequence spans 410 residues: Peptidase T-like protein YPO1009/y3403/YP_3421 (410 aa).

H82 lines the Zn(2+) pocket. D84 is a catalytic residue. Residue D144 coordinates Zn(2+). The active-site Proton acceptor is the E176. Zn(2+)-binding residues include E177, D200, and H382.

Belongs to the peptidase M20B family. Zn(2+) serves as cofactor.

This chain is Peptidase T-like protein YPO1009/y3403/YP_3421, found in Yersinia pestis.